Here is a 353-residue protein sequence, read N- to C-terminus: ATPase GET3A (353 aa).

Residue 27–34 participates in ATP binding; the sequence is KGGVGKTT. Residue aspartate 56 is part of the active site. ATP-binding residues include glutamate 226 and asparagine 253. The stretch at 320–353 forms a coiled coil; the sequence is TTSRSNVEELERKVHTLRLQLKTAEEELERVKSG.

The protein belongs to the arsA ATPase family. Homodimer. Interacts with GET1 and GET4.

It is found in the cytoplasm. The protein resides in the cytosol. It localises to the endoplasmic reticulum. The catalysed reaction is ATP + H2O = ADP + phosphate + H(+). In terms of biological role, ATPase required for the post-translational delivery of tail-anchored (TA) proteins to the endoplasmic reticulum. Recognizes and selectively binds the transmembrane domain of TA proteins in the cytosol. This complex then targets to the endoplasmic reticulum by membrane-bound receptors, where the tail-anchored protein is released for insertion. This process is regulated by ATP binding and hydrolysis. ATP binding drives the homodimer towards the closed dimer state, facilitating recognition of newly synthesized TA membrane proteins. ATP hydrolysis is required for insertion. Subsequently, the homodimer reverts towards the open dimer state, lowering its affinity for the membrane-bound receptor, and returning it to the cytosol to initiate a new round of targeting. Involved in the control of root hair growth through the regulation of syntaxin SYP123 expression. In Arabidopsis thaliana (Mouse-ear cress), this protein is ATPase GET3A.